An 810-amino-acid polypeptide reads, in one-letter code: Myoneurin (810 aa).

The 68-residue stretch at 24-91 (CDCTVSIGQA…IYTGDLNMDR (68 aa)) folds into the BTB domain. Disordered regions lie at residues 122 to 146 (NVGSPMRQAEYEDPRSPLSPDDYEP) and 169 to 466 (VSMD…VKPV). Residues 173–183 (EAQSSSEQTPQ) show a composition bias toward polar residues. 2 stretches are compositionally biased toward basic residues: residues 185-194 (VGKRGRKPKT) and 211-225 (GRGRGRGRPRGRPRV). Positions 229–238 (SSDSTDQSPA) are enriched in polar residues. Residues 243–253 (SPNGSSTSRGS) are compositionally biased toward low complexity. A DNA-binding region (a.T hook 1) is located at residues 254 to 266 (GRPRGRPRVRPLS). The segment covering 270-308 (EDPRNVEDDPAANKDQEVEKGNEEQKKETGEKDDGKNDT) has biased composition (basic and acidic residues). The a.T hook 2 DNA-binding region spans 318–330 (KRGRGRPRIKPVS). Residues 331–346 (TEDQTTNSENVTTNAE) are compositionally biased toward polar residues. Basic and acidic residues predominate over residues 350–361 (EPAKTKDSEGTG). The segment at residues 361 to 373 (GRKRGRPRSKPVS) is a DNA-binding region (a.T hook 3). Acidic residues predominate over residues 386–396 (SGEEAGEETSQ). The segment covering 419–428 (ISKRKRILSR) has biased composition (basic residues). Positions 428 to 432 (RKLKE) match the Nuclear localization signal motif. Positions 435–460 (AGDEEEEEEEEMDDEFENDNEDWAGE) are enriched in acidic residues. 7 C2H2-type zinc fingers span residues 472–494 (PICNICGNLFSEMSSLRRHMRIH), 500–522 (YQCTLCTRSFRQGNQLKTHMRIH), 528–551 (FTCTSCDSRFAQKCQLVYHCRMHH), 557–579 (YKCEFCGAAFATSSNLKIHIRKH), 585–607 (YECGECGKRFTQASTLMYHKRRH), 613–635 (YICDTCGMAFAVSSSLIAHNRKH), and 641–663 (YICLDCGKPCLTAGELRKHMDVH).

It belongs to the krueppel C2H2-type zinc-finger protein family.

The protein resides in the nucleus. The protein is Myoneurin (mynn) of Danio rerio (Zebrafish).